Here is a 719-residue protein sequence, read N- to C-terminus: Fatty acid oxidation complex subunit alpha (719 aa).

The tract at residues 1 to 190 (MVYQGNRITV…KLGLVDATVA (190 aa)) is enoyl-CoA hydratase/isomerase. Asp298 is a binding site for substrate. The tract at residues 313–719 (HDINEAAVLG…AAGETFYATA (407 aa)) is 3-hydroxyacyl-CoA dehydrogenase. Residues Met326, Asp345, 402 to 404 (VVE), Lys409, and Ser431 each bind NAD(+). Residue His452 is the For 3-hydroxyacyl-CoA dehydrogenase activity of the active site. Asn455 contributes to the NAD(+) binding site. Residue Asn502 participates in substrate binding.

In the N-terminal section; belongs to the enoyl-CoA hydratase/isomerase family. This sequence in the C-terminal section; belongs to the 3-hydroxyacyl-CoA dehydrogenase family. In terms of assembly, heterotetramer of two alpha chains (FadB) and two beta chains (FadA).

It carries out the reaction a (3S)-3-hydroxyacyl-CoA + NAD(+) = a 3-oxoacyl-CoA + NADH + H(+). The catalysed reaction is a (3S)-3-hydroxyacyl-CoA = a (2E)-enoyl-CoA + H2O. The enzyme catalyses a 4-saturated-(3S)-3-hydroxyacyl-CoA = a (3E)-enoyl-CoA + H2O. It catalyses the reaction (3S)-3-hydroxybutanoyl-CoA = (3R)-3-hydroxybutanoyl-CoA. It carries out the reaction a (3Z)-enoyl-CoA = a 4-saturated (2E)-enoyl-CoA. The catalysed reaction is a (3E)-enoyl-CoA = a 4-saturated (2E)-enoyl-CoA. Its pathway is lipid metabolism; fatty acid beta-oxidation. Functionally, involved in the aerobic and anaerobic degradation of long-chain fatty acids via beta-oxidation cycle. Catalyzes the formation of 3-oxoacyl-CoA from enoyl-CoA via L-3-hydroxyacyl-CoA. It can also use D-3-hydroxyacyl-CoA and cis-3-enoyl-CoA as substrate. This Psychrobacter cryohalolentis (strain ATCC BAA-1226 / DSM 17306 / VKM B-2378 / K5) protein is Fatty acid oxidation complex subunit alpha.